A 246-amino-acid polypeptide reads, in one-letter code: Probable transcriptional regulatory protein Dole_0371 (246 aa).

It belongs to the TACO1 family.

It localises to the cytoplasm. This is Probable transcriptional regulatory protein Dole_0371 from Desulfosudis oleivorans (strain DSM 6200 / JCM 39069 / Hxd3) (Desulfococcus oleovorans).